The primary structure comprises 114 residues: Large ribosomal subunit protein uL18 (114 aa).

The protein belongs to the universal ribosomal protein uL18 family. Part of the 50S ribosomal subunit; part of the 5S rRNA/L5/L18/L25 subcomplex. Contacts the 5S and 23S rRNAs.

In terms of biological role, this is one of the proteins that bind and probably mediate the attachment of the 5S RNA into the large ribosomal subunit, where it forms part of the central protuberance. This is Large ribosomal subunit protein uL18 from Bacteroides thetaiotaomicron (strain ATCC 29148 / DSM 2079 / JCM 5827 / CCUG 10774 / NCTC 10582 / VPI-5482 / E50).